The primary structure comprises 395 residues: uncharacterized protein (395 aa).

Helical transmembrane passes span 15–35, 56–76, 86–106, 131–151, 175–195, 254–274, 298–318, and 348–368; these read ILAF…VTVF, WPWI…NIII, FHAP…FQIV, AVLL…LITW, WFSF…IFIA, LANI…FAIV, IAIT…TQFV, and VYIP…QVVI.

The protein localises to the cell membrane. This is an uncharacterized protein from Mycoplasma pneumoniae (strain ATCC 29342 / M129 / Subtype 1) (Mycoplasmoides pneumoniae).